Reading from the N-terminus, the 478-residue chain is Multidrug resistance outer membrane protein MdtQ (478 aa).

The first 21 residues, 1 to 21, serve as a signal peptide directing secretion; the sequence is MNRDSFYPAIACFPLLLMLAG. Cysteine 22 is lipidated: N-palmitoyl cysteine. Cysteine 22 carries the S-diacylglycerol cysteine lipid modification.

This sequence belongs to the outer membrane factor (OMF) (TC 1.B.17) family.

It is found in the cell outer membrane. In terms of biological role, could be involved in resistance to puromycin, acriflavine and tetraphenylarsonium chloride. This chain is Multidrug resistance outer membrane protein MdtQ (mdtQ), found in Escherichia coli O6:H1 (strain CFT073 / ATCC 700928 / UPEC).